Here is a 687-residue protein sequence, read N- to C-terminus: Glycine--tRNA ligase beta subunit (687 aa).

It belongs to the class-II aminoacyl-tRNA synthetase family. Tetramer of two alpha and two beta subunits.

It localises to the cytoplasm. It carries out the reaction tRNA(Gly) + glycine + ATP = glycyl-tRNA(Gly) + AMP + diphosphate. The protein is Glycine--tRNA ligase beta subunit of Lactobacillus acidophilus (strain ATCC 700396 / NCK56 / N2 / NCFM).